The primary structure comprises 302 residues: MKLRDKWKIYLGLTTIKVQCPCFFLFHNDENRTTTSNLDSVKSKKKRRKTISDASIVSNGSLVSHPSIDKGKLSILKRYKMSHRLTAIDKLRPLTVLVAWKQLNIAMRPIFPQHRYTEQDKKNWKKKVIIEDLNFLVLRCICACEAISDFEELLGNMRIGLIIDISLLGMNSNESSFLHYLVEVWSIFYLEILPYIEATFLPVTFAKFEIAQLFEEPMKTYWLKKSANIDLKLFSIWVFRKFVVMPKLKKTNRFIEIPQLNTQQQILLVQMISIISLIKPQDESEDLLMNWLNELTLKFLYV.

This is an uncharacterized protein from Schizosaccharomyces pombe (strain 972 / ATCC 24843) (Fission yeast).